We begin with the raw amino-acid sequence, 663 residues long: Terreic acid cluster-specific transcription factor atF (663 aa).

The segment covering 1 to 20 (MFATFNSSMDNRSSANSPVA) has biased composition (polar residues). 2 disordered regions span residues 1–28 (MFAT…PKRT) and 55–126 (TRGV…SPSQ). Positions 34 to 60 (CDWCRLNRVKCDDGQPCKNCRTRGVRC) form a DNA-binding region, zn(2)-C6 fungal-type. Residues 55–64 (TRGVRCRKGS) are compositionally biased toward basic residues. Low complexity-rich tracts occupy residues 73 to 88 (SSSA…QGAQ) and 105 to 125 (ATTS…PSPS).

It is found in the nucleus. In terms of biological role, transcription factor that regulates the expression of the gene cluster that mediates the biosynthesis of terreic acid, a quinone epoxide inhibitor of Bruton's tyrosine kinase. This chain is Terreic acid cluster-specific transcription factor atF, found in Aspergillus terreus (strain NIH 2624 / FGSC A1156).